The primary structure comprises 510 residues: Archaeal glutamate synthase [NADPH] (510 aa).

4Fe-4S ferredoxin-type domains follow at residues 10–37 (YKVEVDPNRCMLCERCTIECSWGVYRRE) and 38–68 (GDRIISYSNRCGACHRCVVMCPRDAITIKEN). Cys19, Cys22, Cys25, Cys29, Cys48, Cys51, Cys54, and Cys58 together coordinate [4Fe-4S] cluster.

This sequence belongs to the glutamate synthase family. Requires FMN as cofactor.

It carries out the reaction 2 L-glutamate + NADP(+) = L-glutamine + 2-oxoglutarate + NADPH + H(+). The sequence is that of Archaeal glutamate synthase [NADPH] from Methanocaldococcus jannaschii (strain ATCC 43067 / DSM 2661 / JAL-1 / JCM 10045 / NBRC 100440) (Methanococcus jannaschii).